Consider the following 486-residue polypeptide: Cobyric acid synthase (486 aa).

The region spanning 251 to 439 (RAKIVVPMLS…VHGLFERGEA (189 aa)) is the GATase cobBQ-type domain. The active-site Nucleophile is C333. The active site involves H431.

This sequence belongs to the CobB/CobQ family. CobQ subfamily.

Its pathway is cofactor biosynthesis; adenosylcobalamin biosynthesis. Its function is as follows. Catalyzes amidations at positions B, D, E, and G on adenosylcobyrinic A,C-diamide. NH(2) groups are provided by glutamine, and one molecule of ATP is hydrogenolyzed for each amidation. In Caulobacter sp. (strain K31), this protein is Cobyric acid synthase.